The primary structure comprises 724 residues: Probable methyltransferase PMT28 (724 aa).

Over M1–G22 the chain is Cytoplasmic. Residues I23 to F43 traverse the membrane as a helical; Signal-anchor for type II membrane protein segment. The Lumenal segment spans residues L44–P724. Positions E63–P211 are disordered. Positions S71–K98 are enriched in basic and acidic residues. Residues H107–D125 show a composition bias toward basic residues. Residues V126–Q140 are compositionally biased toward basic and acidic residues. A compositionally biased stretch (acidic residues) spans E141–G173. Residues N305, N316, and N568 are each glycosylated (N-linked (GlcNAc...) asparagine).

This sequence belongs to the methyltransferase superfamily.

It is found in the golgi apparatus membrane. In Arabidopsis thaliana (Mouse-ear cress), this protein is Probable methyltransferase PMT28.